Here is a 215-residue protein sequence, read N- to C-terminus: Oligoribonuclease (215 aa).

One can recognise an Exonuclease domain in the interval 5 to 170; it reads LVWIDCEMTG…ADIHESIREL (166 aa). Y127 is a catalytic residue. The segment at 196–215 is disordered; that stretch reads LDEGKDAPGPSDSASAPPTG. Low complexity predominate over residues 202–215; the sequence is APGPSDSASAPPTG.

The protein belongs to the oligoribonuclease family.

It localises to the cytoplasm. 3'-to-5' exoribonuclease specific for small oligoribonucleotides. The polypeptide is Oligoribonuclease (Mycobacterium avium (strain 104)).